A 286-amino-acid chain; its full sequence is Polyamine aminopropyltransferase (286 aa).

The 234-residue stretch at 6–239 (PVWIDEVFED…GWWSWLYASD (234 aa)) folds into the PABS domain. Gln-34 lines the S-methyl-5'-thioadenosine pocket. 2 residues coordinate spermidine: His-65 and Asp-89. S-methyl-5'-thioadenosine contacts are provided by residues Glu-109 and 140–141 (DG). The active-site Proton acceptor is the Asp-159. 159–162 (DGSD) contacts spermidine. S-methyl-5'-thioadenosine is bound at residue Pro-166.

The protein belongs to the spermidine/spermine synthase family. Homodimer or homotetramer. Homodimer.

The protein localises to the cytoplasm. The catalysed reaction is S-adenosyl 3-(methylsulfanyl)propylamine + putrescine = S-methyl-5'-thioadenosine + spermidine + H(+). It participates in amine and polyamine biosynthesis; spermidine biosynthesis; spermidine from putrescine: step 1/1. In terms of biological role, catalyzes the irreversible transfer of a propylamine group from the amino donor S-adenosylmethioninamine (decarboxy-AdoMet) to putrescine (1,4-diaminobutane) to yield spermidine. The chain is Polyamine aminopropyltransferase from Synechococcus elongatus (strain ATCC 33912 / PCC 7942 / FACHB-805) (Anacystis nidulans R2).